Reading from the N-terminus, the 420-residue chain is MYSPEEAAELKRRNYRSIREMIRLSYTVGFNLLDPSRCGQVLRIWTIVLSVSSLASLYGHWQMLARYIHDIPRIGETAGTALQFLTSIAKMWYFLFAHRQIYELLRKARCHELLQKCELFERMSDLPVIKEIRQQVESTMNRYWASTRRQILIYLYSCICITTNYFINSFVINLYRYFTKPKGSYDIMLPLPSLYPAWEHKGLEFPYYHIQMYLETCSLYICGMCAVSFDGVFIVLCLHSVGLMRSLNQMVEQATSELVPPDRRVEYLRCCIYQYQRVANFATEVNNCFRHITFTQFLLSLFNWGLALFQMSVGLGNNSSITMIRMTMYLVAAGYQIVVYCYNGQRFATASEEIANAFYQVRWYGESREFRHLIRMMLMRTNRGFRLDVSWFMQMSLPTLMAMVRTSGQYFLLLQNVNQK.

The Cytoplasmic portion of the chain corresponds to Met1–Arg43. The chain crosses the membrane as a helical span at residues Ile44–Leu64. Over Ala65–Glu76 the chain is Extracellular. Residues Thr77 to Ala97 form a helical membrane-spanning segment. Over His98–Gln150 the chain is Cytoplasmic. The helical transmembrane segment at Ile151–Val171 threads the bilayer. The Extracellular segment spans residues Ile172 to Cys217. Residues Ser218–Leu238 traverse the membrane as a helical segment. At His239–Gln296 the chain is on the cytoplasmic side. The chain crosses the membrane as a helical span at residues Phe297 to Asn317. N-linked (GlcNAc...) asparagine glycosylation is present at Asn318. Residues Asn318–Ser320 lie on the Extracellular side of the membrane. The helical transmembrane segment at Ile321–Cys341 threads the bilayer. Residues Tyr342–Leu387 lie on the Cytoplasmic side of the membrane. A helical transmembrane segment spans residues Asp388–Gly408. Over Gln409 to Lys420 the chain is Extracellular.

This sequence belongs to the insect chemoreceptor superfamily. Heteromeric odorant receptor channel (TC 1.A.69) family. Or63a subfamily. In terms of assembly, interacts with Orco. Complexes exist early in the endomembrane system in olfactory sensory neurons (OSNs), coupling these complexes to the conserved ciliary trafficking pathway.

Its subcellular location is the cell membrane. Odorant receptor which mediates acceptance or avoidance behavior, depending on its substrates. The odorant receptor repertoire encodes a large collection of odor stimuli that vary widely in identity, intensity, and duration. May form a complex with Orco to form odorant-sensing units, providing sensitive and prolonged odorant signaling and calcium permeability. Involved in the behavioral responses to butyl acetate, isoamyl acetate, and hexanoic acid. The protein is Odorant receptor 63a (Or63a) of Drosophila melanogaster (Fruit fly).